A 147-amino-acid chain; its full sequence is 3-dehydroquinate dehydratase (147 aa).

Residue Tyr-24 is the Proton acceptor of the active site. Substrate is bound by residues Asn-75, His-81, and Asp-88. Catalysis depends on His-101, which acts as the Proton donor. Substrate-binding positions include 102 to 103 and Arg-112; that span reads LS.

The protein belongs to the type-II 3-dehydroquinase family. As to quaternary structure, homododecamer.

It carries out the reaction 3-dehydroquinate = 3-dehydroshikimate + H2O. It functions in the pathway metabolic intermediate biosynthesis; chorismate biosynthesis; chorismate from D-erythrose 4-phosphate and phosphoenolpyruvate: step 3/7. Its function is as follows. Catalyzes a trans-dehydration via an enolate intermediate. This is 3-dehydroquinate dehydratase from Caulobacter sp. (strain K31).